We begin with the raw amino-acid sequence, 238 residues long: NADH-quinone oxidoreductase subunit C (238 aa).

The disordered stretch occupies residues 1-20 (MSSPDQNPSDAAGQTGSSNE).

Belongs to the complex I 30 kDa subunit family. In terms of assembly, NDH-1 is composed of 14 different subunits. Subunits NuoB, C, D, E, F, and G constitute the peripheral sector of the complex.

The protein localises to the cell membrane. The catalysed reaction is a quinone + NADH + 5 H(+)(in) = a quinol + NAD(+) + 4 H(+)(out). Functionally, NDH-1 shuttles electrons from NADH, via FMN and iron-sulfur (Fe-S) centers, to quinones in the respiratory chain. The immediate electron acceptor for the enzyme in this species is believed to be a menaquinone. Couples the redox reaction to proton translocation (for every two electrons transferred, four hydrogen ions are translocated across the cytoplasmic membrane), and thus conserves the redox energy in a proton gradient. This Mycobacterium ulcerans (strain Agy99) protein is NADH-quinone oxidoreductase subunit C.